Consider the following 379-residue polypeptide: MSNISNDSGLDDSANSGAVVSANGPLAATRLSWFLAEVDDGLMKDGKPNGRRRLCVLHSMELLESDVSDKYMTRFVEFRVNGMVLEAKLILAADERRLVDAALLSMSKEEREDAGGQQLLVQYTENEKAGERLIQKLVSPNNVMLLSTKPELKGNPLVRLAPGCIAHILYAYESRDYMEKILLHLKARSFDLAFDDNLEAEPEAMNDDTWMLVQYSPEPEMVVYQVVQYRQTVWRKENLFKDVIAYMQLPGSDIVLQAVVISYGQDKEVQDAKYEELQRFSFDIDFPLPEELEKHPDHMTSTALFSRTSLYQKAEQRDTTGEHRELRKSLEQMSEKAQGEAQMIIDAFDMVDNINKNLQSRLSGEVRSVVEVTSGDELH.

The heterotrimeric Elba complex consists of Elba1, Elba2 and Elba3.

The protein localises to the nucleus. In terms of biological role, the heterotrimeric Elba complex is required for chromatin domain boundary function during early embryogenesis. It binds to a 8-bp sequence 5'-CCAATAAG-3' in the Fab-7 insulator or boundary element in the bithorax complex and contributes to its insulator or boundary activity. Elba3 lacks DNA-binding activity and plays the role of an adapter protein, bringing Elba1 and 2 together, thereby establishing a complex that recognizes the asymmetric sequence motif through the BEN domains of Elba1 and 2. The sequence is that of Early boundary activity protein 3 from Drosophila melanogaster (Fruit fly).